The following is a 355-amino-acid chain: Chorismate synthase (355 aa).

Arginine 48 lines the NADP(+) pocket. Residues 125–127 (RSS), 239–240 (NA), glycine 280, 295–299 (KPVAT), and arginine 321 each bind FMN.

This sequence belongs to the chorismate synthase family. As to quaternary structure, homotetramer. FMNH2 is required as a cofactor.

The enzyme catalyses 5-O-(1-carboxyvinyl)-3-phosphoshikimate = chorismate + phosphate. Its pathway is metabolic intermediate biosynthesis; chorismate biosynthesis; chorismate from D-erythrose 4-phosphate and phosphoenolpyruvate: step 7/7. Functionally, catalyzes the anti-1,4-elimination of the C-3 phosphate and the C-6 proR hydrogen from 5-enolpyruvylshikimate-3-phosphate (EPSP) to yield chorismate, which is the branch point compound that serves as the starting substrate for the three terminal pathways of aromatic amino acid biosynthesis. This reaction introduces a second double bond into the aromatic ring system. This chain is Chorismate synthase, found in Flavobacterium psychrophilum (strain ATCC 49511 / DSM 21280 / CIP 103535 / JIP02/86).